The chain runs to 763 residues: Disintegrin and metalloproteinase domain-containing protein 29 (763 aa).

The first 31 residues, 1 to 31 (MNMIEALLSMRVLFLTQVFGIFLCFPGLTKA), serve as a signal peptide directing secretion. Positions 32-200 (GHLHYHSSIE…ILKQSSFEDW (169 aa)) are excised as a propeptide. 3 N-linked (GlcNAc...) asparagine glycosylation sites follow: N164, N177, and N223. The Extracellular segment spans residues 201-684 (WTHTKIVELV…KTNKKKHFFY (484 aa)). The Peptidase M12B domain occupies 205–396 (KIVELVVVVD…NTRCLMENMY (192 aa)). 3 disulfide bridges follow: C313–C390, C353–C375, and C355–C360. 5 N-linked (GlcNAc...) asparagine glycosylation sites follow: N374, N424, N434, N475, and N584. A Disintegrin domain is found at 403–489 (RTRCGNGVVE…ECPDDAYVED (87 aa)). C461 and C481 are oxidised to a cystine. 3 disulfides stabilise this stretch: C631–C642, C636–C648, and C650–C659. Positions 631-660 (CTPAFCNYRGICNNKHHCHCNFHWDPPNCM) constitute an EGF-like domain. A helical transmembrane segment spans residues 685–705 (LLLLQLIILACLLSCLLWLLF). Topologically, residues 706–763 (NIKGSKRKPQVQPTPVKTKKVSKKVPSQKPSPVPSPSLPQLRMPSRSASPTSSIKSTN) are cytoplasmic. Positions 712–763 (RKPQVQPTPVKTKKVSKKVPSQKPSPVPSPSLPQLRMPSRSASPTSSIKSTN) are disordered. Over residues 751–763 (RSASPTSSIKSTN) the composition is skewed to polar residues.

Its subcellular location is the membrane. Functionally, may be involved in spermatogenesis and fertilization. Seems to be a non catalytic metalloprotease-like protein. In Mus musculus (Mouse), this protein is Disintegrin and metalloproteinase domain-containing protein 29 (Adam29).